We begin with the raw amino-acid sequence, 154 residues long: UPF0178 protein SSP2038 (154 aa).

Belongs to the UPF0178 family.

The sequence is that of UPF0178 protein SSP2038 from Staphylococcus saprophyticus subsp. saprophyticus (strain ATCC 15305 / DSM 20229 / NCIMB 8711 / NCTC 7292 / S-41).